A 332-amino-acid chain; its full sequence is L-lactate dehydrogenase A chain (332 aa).

NAD(+)-binding positions include 29-57 and Arg99; that span reads GAVG…IEDK. Arg106, Asn138, and Arg169 together coordinate substrate. An NAD(+)-binding site is contributed by Asn138. The Proton acceptor role is filled by His193. Thr248 serves as a coordination point for substrate.

This sequence belongs to the LDH/MDH superfamily. LDH family. As to quaternary structure, homotetramer.

Its subcellular location is the cytoplasm. It carries out the reaction (S)-lactate + NAD(+) = pyruvate + NADH + H(+). It functions in the pathway fermentation; pyruvate fermentation to lactate; (S)-lactate from pyruvate: step 1/1. In terms of biological role, interconverts simultaneously and stereospecifically pyruvate and lactate with concomitant interconversion of NADH and NAD(+). The polypeptide is L-lactate dehydrogenase A chain (LDHA) (Pelodiscus sinensis japonicus (Chinese soft-shelled turtle)).